The sequence spans 353 residues: uncharacterized protein (353 aa).

The protein belongs to the MG067/MG068/MG395 family.

This is an uncharacterized protein from Mycoplasma pneumoniae (strain ATCC 29342 / M129 / Subtype 1) (Mycoplasmoides pneumoniae).